A 656-amino-acid chain; its full sequence is DNA mismatch repair protein MutL (656 aa).

A disordered region spans residues 385-427; sequence DNSDSLTEQNSTDYTVNQPETGSVSEKITDRTVESSNEFTDRT. A compositionally biased stretch (polar residues) spans 387–410; sequence SDSLTEQNSTDYTVNQPETGSVSE. Positions 411-427 are enriched in basic and acidic residues; the sequence is KITDRTVESSNEFTDRT.

The protein belongs to the DNA mismatch repair MutL/HexB family.

Its function is as follows. This protein is involved in the repair of mismatches in DNA. It is required for dam-dependent methyl-directed DNA mismatch repair. May act as a 'molecular matchmaker', a protein that promotes the formation of a stable complex between two or more DNA-binding proteins in an ATP-dependent manner without itself being part of a final effector complex. The chain is DNA mismatch repair protein MutL from Lactococcus lactis subsp. cremoris (strain SK11).